Consider the following 216-residue polypeptide: UPF0301 protein Nham_3550 (216 aa).

The span at 1–10 shows a compositional bias: basic residues; sequence MSAARKRPGT. Positions 1 to 25 are disordered; it reads MSAARKRPGTGRRQTDDADTGAPDQ.

It belongs to the UPF0301 (AlgH) family.

In Nitrobacter hamburgensis (strain DSM 10229 / NCIMB 13809 / X14), this protein is UPF0301 protein Nham_3550.